Consider the following 620-residue polypeptide: Carotenoid isomerooxygenase (620 aa).

H211, H267, and H337 together coordinate Fe cation. A disordered region spans residues 440-459; sequence NGKQATAGEESPKRDAKRGR. A compositionally biased stretch (basic and acidic residues) spans 449–459; the sequence is ESPKRDAKRGR. H612 is a binding site for Fe cation.

Belongs to the carotenoid oxygenase family. The cofactor is Fe(2+). In terms of tissue distribution, expression follows organogenesis of the larval Bolwig's organ (BO), which mediates larval photophobic behavior. In the adult, expression is restricted exclusively to the brain. Expressed in both neuronal cells and glia cells. Not active within photoreceptors. Active within neuronal cells within the central nervous system.

The catalysed reaction is all-trans-zeaxanthin + O2 = (3R)-11-cis-3-hydroxyretinal + (3R)-all-trans-3-hydroxyretinal. Its pathway is cofactor metabolism; retinol metabolism. Its function is as follows. Catalyzes the oxidative cleavage at the 15,15'-double bond of carotenoids and the simultaneous all-trans to 11-cis isomerization of one cleavage product. Carotenoids like 11-cis retinal can promote visual pigment biogenesis in the dark. Essential for the biosynthesis of the 3-hydroxyretinal chromophore of rhodopsin from zeaxanthin and for proper photoreceptor development. Also essential for larval light perception. This Drosophila melanogaster (Fruit fly) protein is Carotenoid isomerooxygenase (ninaB).